Reading from the N-terminus, the 379-residue chain is MAKKDYYEILGVPKTADEREIKKAYKRLAMKFHPDRNQGDKEAEAKFKEIKEAYEILTDAQKRAAYDQYGHAAFEQGGMGGGGFGGGFGNGADFSDIFGDVFGDIFGGGRGRRASRGADLRYNMELTLEEAVRGVTKEIRIPTLEECEVCHGSGAKPGSQPQTCPTCHGAGQVQMRQGFFAVQQTCPHCQGRGTLIKDPCNSCHGHGRIEKTKTLSVKIPAGVDTGDRIRLAGEGEAGEQGAPAGDLYVQVQVKQHPIFEREGNNLYCEVPINFAMAALGGEIEVPTLDGRVMLKVPSETQTGKLFRMRGKGVKSVRGGAQGDLLCRVVVETPVGLNDRQKALLQELQESFGGPTGEKNSPRSKSFFDGVKKFFDDLTR.

The region spanning 5–70 (DYYEILGVPK…QKRAAYDQYG (66 aa)) is the J domain. Residues 134–212 (GVTKEIRIPT…CHGHGRIEKT (79 aa)) form a CR-type zinc finger. Cys-147, Cys-150, Cys-164, Cys-167, Cys-186, Cys-189, Cys-200, and Cys-203 together coordinate Zn(2+). 4 CXXCXGXG motif repeats span residues 147-154 (CEVCHGSG), 164-171 (CPTCHGAG), 186-193 (CPHCQGRG), and 200-207 (CNSCHGHG).

This sequence belongs to the DnaJ family. In terms of assembly, homodimer. Zn(2+) is required as a cofactor.

The protein localises to the cytoplasm. Its function is as follows. Participates actively in the response to hyperosmotic and heat shock by preventing the aggregation of stress-denatured proteins and by disaggregating proteins, also in an autonomous, DnaK-independent fashion. Unfolded proteins bind initially to DnaJ; upon interaction with the DnaJ-bound protein, DnaK hydrolyzes its bound ATP, resulting in the formation of a stable complex. GrpE releases ADP from DnaK; ATP binding to DnaK triggers the release of the substrate protein, thus completing the reaction cycle. Several rounds of ATP-dependent interactions between DnaJ, DnaK and GrpE are required for fully efficient folding. Also involved, together with DnaK and GrpE, in the DNA replication of plasmids through activation of initiation proteins. The chain is Chaperone protein DnaJ from Cronobacter sakazakii (strain ATCC BAA-894) (Enterobacter sakazakii).